The primary structure comprises 467 residues: Chromosomal replication initiator protein DnaA (467 aa).

Residues 1 to 80 (MTSELWHQCL…APRISLKIGS (80 aa)) are domain I, interacts with DnaA modulators. The domain II stretch occupies residues 80 to 130 (SITGNSKGQQASKDSAVGATRTTAPSRPVIADVAPSGERNVTVEGAIKHES). A domain III, AAA+ region region spans residues 131–347 (YLNPTFTFET…GALKLVIANA (217 aa)). G175, G177, K178, and T179 together coordinate ATP. The segment at 348 to 467 (HFTGQEITPA…YQNFMRMLTS (120 aa)) is domain IV, binds dsDNA.

The protein belongs to the DnaA family. In terms of assembly, oligomerizes as a right-handed, spiral filament on DNA at oriC.

Its subcellular location is the cytoplasm. Plays an essential role in the initiation and regulation of chromosomal replication. ATP-DnaA binds to the origin of replication (oriC) to initiate formation of the DNA replication initiation complex once per cell cycle. Binds the DnaA box (a 9 base pair repeat at the origin) and separates the double-stranded (ds)DNA. Forms a right-handed helical filament on oriC DNA; dsDNA binds to the exterior of the filament while single-stranded (ss)DNA is stabiized in the filament's interior. The ATP-DnaA-oriC complex binds and stabilizes one strand of the AT-rich DNA unwinding element (DUE), permitting loading of DNA polymerase. After initiation quickly degrades to an ADP-DnaA complex that is not apt for DNA replication. Binds acidic phospholipids. In Hahella chejuensis (strain KCTC 2396), this protein is Chromosomal replication initiator protein DnaA.